The sequence spans 423 residues: Cyclin-dependent kinase 14 (423 aa).

3 positions are modified to phosphoserine: Ser32, Ser49, and Ser88. Over residues 49–64 (SENNACINFKTSSTGK) the composition is skewed to polar residues. Positions 49–87 (SENNACINFKTSSTGKESPKVRRHSSPSSPTSPKFGKAD) are disordered. In terms of domain architecture, Protein kinase spans 89-373 (YEKLEKLGEG…AQAALSHEYF (285 aa)). Residues 95 to 103 (LGEGSYATV) and Lys118 each bind ATP. Asp210 functions as the Proton acceptor in the catalytic mechanism. The tract at residues 403–423 (ESMRAFGKNNSYGKSLSNSKH) is disordered. Residues 410–423 (KNNSYGKSLSNSKH) are compositionally biased toward polar residues.

This sequence belongs to the protein kinase superfamily. CMGC Ser/Thr protein kinase family. CDC2/CDKX subfamily. Found in a complex with LRP6, CCNY and CAPRIN2 during G2/M stage; CAPRIN2 functions as a scaffold for the complex by binding to CCNY via its N terminus and to CDK14 via its C terminus. Interacts with CCNY; CCNY mediates its recruitment to the plasma membrane and promotes phosphorylation of LRP6. Interacts with CCDN3 and CDKN1A. Interacts with SEPT8. Interacts with 14-3-3 proteina YWHAB, YWHAE, YWHAH and YWHAQ.

It localises to the cell membrane. The protein resides in the cytoplasm. It is found in the nucleus. The catalysed reaction is L-seryl-[protein] + ATP = O-phospho-L-seryl-[protein] + ADP + H(+). It carries out the reaction L-threonyl-[protein] + ATP = O-phospho-L-threonyl-[protein] + ADP + H(+). With respect to regulation, serine/threonine-protein kinase activity is promoted by associated cyclins CCDN3 and CCNY and repressed by CDKN1A. Functionally, serine/threonine-protein kinase involved in the control of the eukaryotic cell cycle, whose activity is controlled by an associated cyclin. Acts as a cell-cycle regulator of Wnt signaling pathway during G2/M phase by mediating the phosphorylation of LRP6 at 'Ser-1490', leading to the activation of the Wnt signaling pathway. Acts as a regulator of cell cycle progression and cell proliferation via its interaction with CCDN3. Phosphorylates RB1 in vitro, however the relevance of such result remains to be confirmed in vivo. May also play a role in meiosis, neuron differentiation and may indirectly act as a negative regulator of insulin-responsive glucose transport. The chain is Cyclin-dependent kinase 14 (CDK14) from Callithrix jacchus (White-tufted-ear marmoset).